Consider the following 128-residue polypeptide: Fluoride-specific ion channel FluC (128 aa).

4 helical membrane passes run 4–24 (LILA…RYLI), 37–57 (PYGT…IMDI), 63–83 (LISG…LTTF), and 99–119 (ILMG…GVII). Na(+) is bound by residues G78 and T81.

This sequence belongs to the fluoride channel Fluc/FEX (TC 1.A.43) family.

It localises to the cell membrane. It catalyses the reaction fluoride(in) = fluoride(out). Na(+) is not transported, but it plays an essential structural role and its presence is essential for fluoride channel function. Fluoride-specific ion channel. Important for reducing fluoride concentration in the cell, thus reducing its toxicity. This is Fluoride-specific ion channel FluC from Clostridium novyi (strain NT).